The following is an 889-amino-acid chain: Mixed-linked glucan synthase 2 (889 aa).

The tract at residues 34-53 (AGADGQNGRRSPVAKRVNDG) is disordered. The next 2 membrane-spanning stretches (helical) occupy residues 93–113 (ILHP…AFFA) and 123–143 (GVWL…SWVL). D213 is a catalytic residue. Residues 265-293 (ELMSDHRRVRREYEEFKVRIDSLSSTIRQ) adopt a coiled-coil conformation. 2 residues coordinate substrate: D411 and D413. Residue D579 is part of the active site. 6 consecutive transmembrane segments (helical) span residues 655-675 (TYPI…MWLI), 685-705 (FGEY…IGMF), 723-743 (FYMI…ALKL), 777-797 (LLIP…VAVG), 811-831 (LAVL…PFAL), and 842-862 (AVLF…YVAF).

The protein belongs to the glycosyltransferase 2 family. Plant cellulose synthase-like F subfamily.

The protein localises to the golgi apparatus membrane. Catalyzes both beta-1,3 and beta-1,4 glycosidic linkage on beta-D-glucan. Essential for (1,3;1,4)-beta-D-glucans synthesis in grasses and cereals (Poaceae). The mixed-linked glucans (which are not present in walls of dicotyledons or most other monocotyledonous plants) are particularly important constituents of the walls of the starchy endosperm and aleurone cells of cereal grains such as oats, wheat, rice and barley. They can account for up to 70% by weight of the wall. In Oryza sativa subsp. japonica (Rice), this protein is Mixed-linked glucan synthase 2 (CSLF2).